A 556-amino-acid chain; its full sequence is U-box domain-containing protein 38 (556 aa).

Residues methionine 1–proline 34 form a disordered region. Residues serine 13–glutamine 32 are compositionally biased toward low complexity. The 77-residue stretch at glutamine 32–serine 108 folds into the U-box domain. ARM repeat units lie at residues aspartate 256–leucine 295, lysine 297–leucine 336, aspartate 338–leucine 378, glutamine 380–cysteine 417, and cysteine 418–histidine 468.

As to quaternary structure, binds to SD16, SD17, SD18 and SD129.

The enzyme catalyses S-ubiquitinyl-[E2 ubiquitin-conjugating enzyme]-L-cysteine + [acceptor protein]-L-lysine = [E2 ubiquitin-conjugating enzyme]-L-cysteine + N(6)-ubiquitinyl-[acceptor protein]-L-lysine.. Its pathway is protein modification; protein ubiquitination. In terms of biological role, functions as an E3 ubiquitin ligase. The polypeptide is U-box domain-containing protein 38 (PUB38) (Arabidopsis thaliana (Mouse-ear cress)).